The primary structure comprises 555 residues: Urocanate hydratase (555 aa).

Residues 51–52 (GG), Q129, 175–177 (GMG), E195, 241–242 (NA), 262–266 (QTSAH), 272–273 (YL), and Y321 each bind NAD(+). Residue C409 is part of the active site. Residue G491 coordinates NAD(+).

It belongs to the urocanase family. Requires NAD(+) as cofactor.

The protein localises to the cytoplasm. It catalyses the reaction 4-imidazolone-5-propanoate = trans-urocanate + H2O. The protein operates within amino-acid degradation; L-histidine degradation into L-glutamate; N-formimidoyl-L-glutamate from L-histidine: step 2/3. Functionally, catalyzes the conversion of urocanate to 4-imidazolone-5-propionate. The polypeptide is Urocanate hydratase (Hyphomonas neptunium (strain ATCC 15444)).